Reading from the N-terminus, the 347-residue chain is UPF0284 protein M1627_0030 (347 aa).

It belongs to the UPF0284 family.

The polypeptide is UPF0284 protein M1627_0030 (Saccharolobus islandicus (strain M.16.27) (Sulfolobus islandicus)).